Here is a 239-residue protein sequence, read N- to C-terminus: Trimethylguanosine synthase (239 aa).

It belongs to the methyltransferase superfamily. Trimethylguanosine synthase family. As to quaternary structure, monomer. Interacts with mug174; both proteins are required to maintain Cajal body integrity.

Its subcellular location is the nucleus. It is found in the cajal body. The catalysed reaction is a 5'-end (N(7)-methyl 5'-triphosphoguanosine)-ribonucleoside in snRNA + S-adenosyl-L-methionine = a 5'-end (N(2),N(7)-dimethyl 5'-triphosphoguanosine)-ribonucleoside in snRNA + S-adenosyl-L-homocysteine + H(+). The enzyme catalyses a 5'-end (N(7)-methyl 5'-triphosphoguanosine)-ribonucleoside in snoRNA + S-adenosyl-L-methionine = a 5'-end (N(2),N(7)-dimethyl 5'-triphosphoguanosine)-ribonucleoside in snoRNA + S-adenosyl-L-homocysteine + H(+). It catalyses the reaction a 5'-end (N(2),N(7)-dimethyl 5'-triphosphoguanosine)-ribonucleoside in snRNA + S-adenosyl-L-methionine = a 5'-end (N(2),N(2),N(7)-trimethyl 5'-triphosphoguanosine)-ribonucleoside in snRNA + S-adenosyl-L-homocysteine + H(+). It carries out the reaction a 5'-end (N(2),N(7)-dimethyl 5'-triphosphoguanosine)-ribonucleoside in snoRNA + S-adenosyl-L-methionine = a 5'-end (N(2),N(2),N(7)-trimethyl 5'-triphosphoguanosine)-ribonucleoside in snoRNA + S-adenosyl-L-homocysteine + H(+). Its activity is regulated as follows. Substrate inhibited by S-adenosyl-L-homocysteine. Its function is as follows. Catalyzes the two serial methylation steps for the conversion of the 7-monomethylguanosine (m(7)G) caps of snRNAs and snoRNAs to a 2,2,7-trimethylguanosine (m(2,2,7)G) cap structure. The enzyme is specific for guanine, and N7 methylation must precede N2 methylation. Required for pre-mRNA splicing, pre-rRNA processing and small ribosomal subunit synthesis. Involved in nucleolar structural organization. The polypeptide is Trimethylguanosine synthase (tgs1) (Schizosaccharomyces pombe (strain 972 / ATCC 24843) (Fission yeast)).